Here is an 85-residue protein sequence, read N- to C-terminus: Transcriptional repressor protein KorC (85 aa).

The H-T-H motif DNA-binding region spans 28–47 (EVLRLAGLTGGKAAKVLGLG).

Its function is as follows. Acts with KorA as corepressor in the control of the kilC and kilE operons. The chain is Transcriptional repressor protein KorC (korC) from Escherichia coli.